Reading from the N-terminus, the 104-residue chain is Cytochrome c-551 (104 aa).

The first 22 residues, methionine 1 to alanine 22, serve as a signal peptide directing secretion. The heme c site is built by cysteine 34, cysteine 37, histidine 38, and methionine 83.

Binds 1 heme c group covalently per subunit.

The protein resides in the periplasm. Its function is as follows. Electron donor for cytochrome cd1 in nitrite and nitrate respiration. The protein is Cytochrome c-551 (nirM) of Stutzerimonas stutzeri (Pseudomonas stutzeri).